The following is a 427-amino-acid chain: Serine--tRNA ligase (427 aa).

L-serine is bound at residue 230–232 (TAE). 261–263 (RAE) is an ATP binding site. E284 contributes to the L-serine binding site. 348-351 (EISS) is an ATP binding site. S384 contacts L-serine.

The protein belongs to the class-II aminoacyl-tRNA synthetase family. Type-1 seryl-tRNA synthetase subfamily. Homodimer. The tRNA molecule binds across the dimer.

The protein localises to the cytoplasm. It catalyses the reaction tRNA(Ser) + L-serine + ATP = L-seryl-tRNA(Ser) + AMP + diphosphate + H(+). The enzyme catalyses tRNA(Sec) + L-serine + ATP = L-seryl-tRNA(Sec) + AMP + diphosphate + H(+). It participates in aminoacyl-tRNA biosynthesis; selenocysteinyl-tRNA(Sec) biosynthesis; L-seryl-tRNA(Sec) from L-serine and tRNA(Sec): step 1/1. In terms of biological role, catalyzes the attachment of serine to tRNA(Ser). Is also able to aminoacylate tRNA(Sec) with serine, to form the misacylated tRNA L-seryl-tRNA(Sec), which will be further converted into selenocysteinyl-tRNA(Sec). The chain is Serine--tRNA ligase from Moorella thermoacetica (strain ATCC 39073 / JCM 9320).